The following is a 546-amino-acid chain: EH domain-containing protein 2 (546 aa).

2 consecutive EF-hand domains span residues 15–50 (EHQKIYKEWFNIADSDGDGRVSGNDATKFFAMSKLS) and 51–84 (RQELKQVWAVADSKRQGFLGLSEFITAMKLVSLA). One can recognise an EH domain in the interval 16–94 (HQKIYKEWFN…QEGHEITSDL (79 aa)). Ca(2+)-binding residues include Asp28, Asp30, Asp32, Arg34, Asp39, Asp62, and Glu73. Positions 194-430 (FDAKPMVMLL…LLADLMDVPK (237 aa)) constitute a Dynamin-type G domain. The G1 motif stretch occupies residues 204–211 (GQYSTGKT). 204 to 211 (GQYSTGKT) is a GTP binding site. Residues 230–231 (EP) form a G2 motif region. The interval 292–295 (DTPG) is G3 motif. GTP contacts are provided by residues 292–296 (DTPGV) and Lys359. The interval 358–361 (NKAD) is G4 motif. Position 382 (Val382) is a region of interest, G5 motif. Position 395-398 (395-398 (SFND)) interacts with GTP. The Nuclear localization signal signature appears at 429–436 (PKKACDRK). The stretch at 467–490 (KSKAQQRLMDNLEEEFGKVQREFH) forms a coiled coil.

This sequence belongs to the TRAFAC class dynamin-like GTPase superfamily. Dynamin/Fzo/YdjA family. EHD subfamily. In terms of assembly, homooligomer, and heterooligomer with EHD1. Interacts with AP-4 complex subunit sigma (At2g19790).

Its subcellular location is the endosome membrane. It localises to the cell membrane. It is found in the nucleus. The protein resides in the cytoplasm. The catalysed reaction is GTP + H2O = GDP + phosphate + H(+). Involved in endocytosis negative regulation, probably by influencing actin organization. Acts in early endocytic membrane fusion and membrane trafficking of recycling endosomes. Exhibits an inhibitory effect on endocytosis when over-expressed. This is EH domain-containing protein 2 from Arabidopsis thaliana (Mouse-ear cress).